The chain runs to 247 residues: ATP synthase subunit a, chloroplastic (247 aa).

Transmembrane regions (helical) follow at residues 38 to 58 (QVLI…ILVV), 95 to 115 (VPFI…GALL), 134 to 154 (INTT…AGIS), 199 to 219 (LVVV…VMFL), and 220 to 240 (GLFT…AYIG).

It belongs to the ATPase A chain family. As to quaternary structure, F-type ATPases have 2 components, CF(1) - the catalytic core - and CF(0) - the membrane proton channel. CF(1) has five subunits: alpha(3), beta(3), gamma(1), delta(1), epsilon(1). CF(0) has four main subunits: a, b, b' and c.

It is found in the plastid. The protein localises to the chloroplast thylakoid membrane. In terms of biological role, key component of the proton channel; it plays a direct role in the translocation of protons across the membrane. In Lotus japonicus (Lotus corniculatus var. japonicus), this protein is ATP synthase subunit a, chloroplastic.